The sequence spans 341 residues: Glycerol-1-phosphate dehydrogenase [NAD(P)+] (341 aa).

Residues 81–85 (GKAID) and 103–106 (TTAS) each bind NAD(+). Asp-108 provides a ligand contact to substrate. Ser-112 contacts NAD(+). Asp-151 contacts substrate. Residues Asp-151 and His-232 each contribute to the Zn(2+) site. His-236 contacts substrate. His-253 is a binding site for Zn(2+).

The protein belongs to the glycerol-1-phosphate dehydrogenase family. Requires Zn(2+) as cofactor.

It is found in the cytoplasm. It carries out the reaction sn-glycerol 1-phosphate + NAD(+) = dihydroxyacetone phosphate + NADH + H(+). The catalysed reaction is sn-glycerol 1-phosphate + NADP(+) = dihydroxyacetone phosphate + NADPH + H(+). It functions in the pathway membrane lipid metabolism; glycerophospholipid metabolism. Catalyzes the NAD(P)H-dependent reduction of dihydroxyacetonephosphate (DHAP or glycerone phosphate) to glycerol 1-phosphate (G1P). The G1P thus generated is used as the glycerophosphate backbone of phospholipids in the cellular membranes of Archaea. The chain is Glycerol-1-phosphate dehydrogenase [NAD(P)+] from Methanococcus aeolicus (strain ATCC BAA-1280 / DSM 17508 / OCM 812 / Nankai-3).